Consider the following 378-residue polypeptide: uncharacterized protein (378 aa).

The next 11 membrane-spanning stretches (helical) occupy residues 12-34 (SLAF…STFF), 44-66 (VKIY…IFLG), 92-112 (SIAL…LMLI), 132-154 (GFAS…IFLA), 161-180 (EVYA…SIIT), 200-222 (TFLL…IAMM), 235-257 (VEIY…FWGV), 267-285 (VFPL…LFFA), 290-312 (LIFV…RVYI), 327-349 (FLSL…FLFI), and 356-373 (LSAL…FIYL).

The protein localises to the cell membrane. This is an uncharacterized protein from Aquifex aeolicus (strain VF5).